We begin with the raw amino-acid sequence, 81 residues long: Dermaseptin-B7 (81 aa).

Residues 1–22 (MASLKKSLFLVLFLGLVSLSIC) form the signal peptide. Residues 23 to 44 (EEEKRENEDEEEQEDDEQSEMK) constitute a propeptide that is removed on maturation. Residues 24-48 (EEKRENEDEEEQEDDEQSEMKRGLW) form a disordered region. The segment covering 30 to 40 (EDEEEQEDDEQ) has biased composition (acidic residues). The residue at position 78 (valine 78) is a Valine amide. Positions 80 to 81 (EQ) are excised as a propeptide.

This sequence belongs to the frog skin active peptide (FSAP) family. Dermaseptin subfamily. Expressed by the skin glands.

The protein resides in the secreted. Has antimicrobial activity. The chain is Dermaseptin-B7 (DRG1) from Phyllomedusa bicolor (Two-colored leaf frog).